Reading from the N-terminus, the 260-residue chain is MSAYSTNEMMTVAAARRLKNGAVCFVGIGLPSKAANLARLTSSPDVVLIYESGPIGAKPTVLPLSIGDGELAETADTVVPTGEIFRYWLQGGRIDVGFLGAAQVDRFGNINTTVIGDYNKPKVRLPGAGGAPEIAGSAKEVLIILKQSHRTFVDKLAFITSVGHGEGGDHRKQLGLPGKGPVAIITDLCIMEPEAGSNEFIVTSLHPGVTREQVIENTGWAIRFAEQVKETAAPTEVELEALRALEARTAAAHGQQGGEE.

Glu51 is a catalytic residue.

Belongs to the 3-oxoacid CoA-transferase subunit B family. Heterotetramer composed of 2 A and 2 B subunits.

The enzyme catalyses 3-oxoadipate + succinyl-CoA = 3-oxoadipyl-CoA + succinate. Its pathway is aromatic compound metabolism; beta-ketoadipate pathway; acetyl-CoA and succinyl-CoA from 3-oxoadipate: step 1/2. This is 3-oxoadipate CoA-transferase subunit B (catJ) from Pseudomonas knackmussii (strain DSM 6978 / CCUG 54928 / LMG 23759 / B13).